A 672-amino-acid polypeptide reads, in one-letter code: Rho GTPase-activating protein 40 (672 aa).

The disordered stretch occupies residues 43-68 (GCSPGLSTGPTNLQQHPQKPRPADCS). Residues 47–59 (GLSTGPTNLQQHP) show a composition bias toward polar residues. One can recognise a Rho-GAP domain in the interval 321 to 519 (VPLHSLLEAD…MMVQYQDLLW (199 aa)).

In terms of biological role, GTPase activator for the Rho-type GTPases by converting them to an inactive GDP-bound state. The chain is Rho GTPase-activating protein 40 from Mus musculus (Mouse).